The following is a 402-amino-acid chain: Advanced glycosylation end product-specific receptor (402 aa).

Residues 1–22 form the signal peptide; the sequence is MPTGTVARAWVLVLALWGAVAG. One can recognise an Ig-like V-type domain in the interval 23–109; the sequence is GQNITARIGE…ATNRLGKEVK (87 aa). The Extracellular portion of the chain corresponds to 23–341; it reads GQNITARIGE…DGSGLGTLAL (319 aa). Asparagine 25 and asparagine 80 each carry an N-linked (GlcNAc...) asparagine glycan. Intrachain disulfides connect cysteine 38–cysteine 98 and cysteine 143–cysteine 206. Ig-like C2-type domains follow at residues 123–219 and 233–315; these read PEIV…RPLN and PEGI…PPVN. A helical membrane pass occupies residues 342-362; the sequence is ALGILGGLGIAALLIGAILWR. At 363-402 the chain is on the cytoplasmic side; that stretch reads KRQPRLEERKAPESQEDEEERAELNQSEEAEMPENGAGGP. Positions 368-402 are disordered; the sequence is LEERKAPESQEDEEERAELNQSEEAEMPENGAGGP. Phosphoserine is present on residues serine 376 and serine 389. Positions 376–394 are enriched in acidic residues; sequence SQEDEEERAELNQSEEAEM.

Constitutive homodimer; disulfide-linked. Forms homooligomers. Interacts with S100A1 and APP. Interacts with S100B, S100A12 and S100A14. Interacts with TIRAP. Interacts with HMGB1. Interacts with LGP2; this interaction plays an important role in AGER-mediated pro-inflammatory responses and cytokine release. Interacts with double-strand break repair protein MRE11 which is a core component of the MRN complex; the interaction enhances MRE11 endonuclease activity and promotes DNA repair. Interacts with the MCM2-7 complex via interaction with complex member MCM2; the interaction is increased following DNA replication stress and stabilizes the MCM2-7 complex at replication forks. Post-translationally, phosphorylated on its cytoplasmic domain by PKCzeta/PRKCZ upon ligand binding. Phosphorylated by ATM following DNA damage. In terms of processing, targeted by the ubiquitin E3 ligase subunit FBXO10 to mediate its ubiquitination and degradation. In terms of tissue distribution, endothelial cells and cardiomyocytes. Expressed in brain.

Its subcellular location is the cell membrane. It is found in the cell projection. It localises to the phagocytic cup. The protein localises to the early endosome. The protein resides in the nucleus. In terms of biological role, cell surface pattern recognition receptor that senses endogenous stress signals with a broad ligand repertoire including advanced glycation end products, S100 proteins, high-mobility group box 1 protein/HMGB1, amyloid beta/APP oligomers, nucleic acids, histones, phospholipids and glycosaminoglycans. Advanced glycosylation end products are nonenzymatically glycosylated proteins which accumulate in vascular tissue in aging and at an accelerated rate in diabetes. These ligands accumulate at inflammatory sites during the pathogenesis of various diseases including diabetes, vascular complications, neurodegenerative disorders and cancers, and RAGE transduces their binding into pro-inflammatory responses. Upon ligand binding, uses TIRAP and MYD88 as adapters to transduce the signal ultimately leading to the induction of inflammatory cytokines IL6, IL8 and TNFalpha through activation of NF-kappa-B. Interaction with S100A12 on endothelium, mononuclear phagocytes, and lymphocytes triggers cellular activation, with generation of key pro-inflammatory mediators. Interaction with S100B after myocardial infarction may play a role in myocyte apoptosis by activating ERK1/2 and p53/TP53 signaling. Contributes to the translocation of amyloid-beta peptide (ABPP) across the cell membrane from the extracellular to the intracellular space in cortical neurons. ABPP-initiated RAGE signaling, especially stimulation of p38 mitogen-activated protein kinase (MAPK), has the capacity to drive a transport system delivering ABPP as a complex with RAGE to the intraneuronal space. Participates in endothelial albumin transcytosis together with HMGB1 through the RAGE/SRC/Caveolin-1 pathway, leading to endothelial hyperpermeability. Mediates the loading of HMGB1 in extracellular vesicles (EVs) that shuttle HMGB1 to hepatocytes by transferrin-mediated endocytosis and subsequently promote hepatocyte pyroptosis by activating the NLRP3 inflammasome. Binds to DNA and promotes extracellular hypomethylated DNA (CpG DNA) uptake by cells via the endosomal route to activate inflammatory responses. Mediates phagocytosis by non-professional phagocytes (NPP) and this is enhanced by binding to ligands including RNA, DNA, HMGB1 and histones. Promotes NPP-mediated phagocytosis of Saccharomyces cerevisiae spores by binding to RNA attached to the spore wall. Also promotes NPP-mediated phagocytosis of apoptotic cells. Following DNA damage, recruited to DNA double-strand break sites where it colocalizes with the MRN repair complex via interaction with double-strand break repair protein MRE11. Enhances the endonuclease activity of MRE11, promoting the end resection of damaged DNA. Promotes DNA damage repair in trophoblasts which enhances trophoblast invasion and contributes to placental development and maintenance. Protects cells from DNA replication stress by localizing to damaged replication forks where it stabilizes the MCM2-7 complex and promotes faithful progression of the replication fork. This chain is Advanced glycosylation end product-specific receptor (Ager), found in Rattus norvegicus (Rat).